The chain runs to 194 residues: Imidazoleglycerol-phosphate dehydratase (194 aa).

This sequence belongs to the imidazoleglycerol-phosphate dehydratase family.

It is found in the cytoplasm. The catalysed reaction is D-erythro-1-(imidazol-4-yl)glycerol 3-phosphate = 3-(imidazol-4-yl)-2-oxopropyl phosphate + H2O. It functions in the pathway amino-acid biosynthesis; L-histidine biosynthesis; L-histidine from 5-phospho-alpha-D-ribose 1-diphosphate: step 6/9. The polypeptide is Imidazoleglycerol-phosphate dehydratase (Bacillus subtilis (strain 168)).